The sequence spans 87 residues: Phosphoribosyl-ATP pyrophosphatase (87 aa).

The protein belongs to the PRA-PH family.

The protein localises to the cytoplasm. It catalyses the reaction 1-(5-phospho-beta-D-ribosyl)-ATP + H2O = 1-(5-phospho-beta-D-ribosyl)-5'-AMP + diphosphate + H(+). It participates in amino-acid biosynthesis; L-histidine biosynthesis; L-histidine from 5-phospho-alpha-D-ribose 1-diphosphate: step 2/9. This is Phosphoribosyl-ATP pyrophosphatase from Beutenbergia cavernae (strain ATCC BAA-8 / DSM 12333 / CCUG 43141 / JCM 11478 / NBRC 16432 / NCIMB 13614 / HKI 0122).